Consider the following 147-residue polypeptide: UPF0260 protein PMI1174 (147 aa).

It belongs to the UPF0260 family.

The polypeptide is UPF0260 protein PMI1174 (Proteus mirabilis (strain HI4320)).